We begin with the raw amino-acid sequence, 68 residues long: Protein SlyX homolog (68 aa).

It belongs to the SlyX family.

This is Protein SlyX homolog from Brucella abortus (strain S19).